We begin with the raw amino-acid sequence, 405 residues long: 3-isopropylmalate dehydrogenase (405 aa).

86–104 (GAANTVWTTPDGRTDVRPE) is a binding site for NAD(+). Substrate contacts are provided by Arg-111, Arg-121, Arg-148, and Asp-237. Residues Asp-237, Asp-262, and Asp-266 each contribute to the Mg(2+) site. 301-312 (GSAPDLGKQKVN) provides a ligand contact to NAD(+). Positions 352–371 (ADIGGSSSTSEVGDLLPTRS) are disordered.

This sequence belongs to the isocitrate and isopropylmalate dehydrogenases family. Homodimer. Mg(2+) serves as cofactor. Requires Mn(2+) as cofactor.

It localises to the cytoplasm. It catalyses the reaction (2R,3S)-3-isopropylmalate + NAD(+) = 4-methyl-2-oxopentanoate + CO2 + NADH. It functions in the pathway amino-acid biosynthesis; L-leucine biosynthesis; L-leucine from 3-methyl-2-oxobutanoate: step 3/4. Functionally, catalyzes the oxidation of 3-carboxy-2-hydroxy-4-methylpentanoate (3-isopropylmalate) to 3-carboxy-4-methyl-2-oxopentanoate. The product decarboxylates to 4-methyl-2 oxopentanoate. This Yarrowia lipolytica (strain CLIB 122 / E 150) (Yeast) protein is 3-isopropylmalate dehydrogenase (LEU2).